Consider the following 105-residue polypeptide: uncharacterized protein (105 aa).

A helical transmembrane segment spans residues phenylalanine 8–serine 28. Positions aspartate 32–serine 53 are disordered. Residues valine 72–phenylalanine 92 traverse the membrane as a helical segment.

The protein to M.jannaschii MJ1570.

It is found in the cell membrane. This is an uncharacterized protein from Methanothermobacter thermautotrophicus (strain ATCC 29096 / DSM 1053 / JCM 10044 / NBRC 100330 / Delta H) (Methanobacterium thermoautotrophicum).